The following is a 232-amino-acid chain: Flagellar L-ring protein (232 aa).

A signal peptide spans 1–15 (MKKVLFYVLPFAFFG). A lipid anchor (N-palmitoyl cysteine) is attached at Cys-16. A lipid anchor (S-diacylglycerol cysteine) is attached at Cys-16.

It belongs to the FlgH family. As to quaternary structure, the basal body constitutes a major portion of the flagellar organelle and consists of four rings (L,P,S, and M) mounted on a central rod.

The protein localises to the cell outer membrane. It localises to the bacterial flagellum basal body. Functionally, assembles around the rod to form the L-ring and probably protects the motor/basal body from shearing forces during rotation. In Campylobacter jejuni subsp. jejuni serotype O:23/36 (strain 81-176), this protein is Flagellar L-ring protein.